The following is a 318-amino-acid chain: Glycine--tRNA ligase alpha subunit (318 aa).

Belongs to the class-II aminoacyl-tRNA synthetase family. In terms of assembly, tetramer of two alpha and two beta subunits.

The protein localises to the cytoplasm. It carries out the reaction tRNA(Gly) + glycine + ATP = glycyl-tRNA(Gly) + AMP + diphosphate. The chain is Glycine--tRNA ligase alpha subunit from Saccharophagus degradans (strain 2-40 / ATCC 43961 / DSM 17024).